A 137-amino-acid chain; its full sequence is Nucleoside diphosphate kinase (137 aa).

Residues Lys-11, Phe-59, Arg-87, Thr-93, Arg-104, and Asn-114 each coordinate ATP. His-117 (pros-phosphohistidine intermediate) is an active-site residue.

It belongs to the NDK family. As to quaternary structure, homotetramer. Mg(2+) serves as cofactor.

The protein resides in the cytoplasm. It catalyses the reaction a 2'-deoxyribonucleoside 5'-diphosphate + ATP = a 2'-deoxyribonucleoside 5'-triphosphate + ADP. The enzyme catalyses a ribonucleoside 5'-diphosphate + ATP = a ribonucleoside 5'-triphosphate + ADP. Its function is as follows. Major role in the synthesis of nucleoside triphosphates other than ATP. The ATP gamma phosphate is transferred to the NDP beta phosphate via a ping-pong mechanism, using a phosphorylated active-site intermediate. The protein is Nucleoside diphosphate kinase of Frankia casuarinae (strain DSM 45818 / CECT 9043 / HFP020203 / CcI3).